Here is a 300-residue protein sequence, read N- to C-terminus: tRNA-cytidine(32) 2-sulfurtransferase (300 aa).

Residues 57 to 62 carry the PP-loop motif motif; sequence SGGKDS. Cys132, Cys135, and Cys223 together coordinate [4Fe-4S] cluster.

It belongs to the TtcA family. As to quaternary structure, homodimer. Mg(2+) is required as a cofactor. It depends on [4Fe-4S] cluster as a cofactor.

The protein localises to the cytoplasm. It carries out the reaction cytidine(32) in tRNA + S-sulfanyl-L-cysteinyl-[cysteine desulfurase] + AH2 + ATP = 2-thiocytidine(32) in tRNA + L-cysteinyl-[cysteine desulfurase] + A + AMP + diphosphate + H(+). It functions in the pathway tRNA modification. Functionally, catalyzes the ATP-dependent 2-thiolation of cytidine in position 32 of tRNA, to form 2-thiocytidine (s(2)C32). The sulfur atoms are provided by the cysteine/cysteine desulfurase (IscS) system. In Xanthomonas campestris pv. campestris (strain 8004), this protein is tRNA-cytidine(32) 2-sulfurtransferase.